The following is a 341-amino-acid chain: Methionine import ATP-binding protein MetN 3 (341 aa).

Positions Ile2–Ile241 constitute an ABC transporter domain. Position 38-45 (Gly38–Ser45) interacts with ATP.

This sequence belongs to the ABC transporter superfamily. Methionine importer (TC 3.A.1.24) family. The complex is composed of two ATP-binding proteins (MetN), two transmembrane proteins (MetI) and a solute-binding protein (MetQ).

The protein resides in the cell membrane. It carries out the reaction L-methionine(out) + ATP + H2O = L-methionine(in) + ADP + phosphate + H(+). The enzyme catalyses D-methionine(out) + ATP + H2O = D-methionine(in) + ADP + phosphate + H(+). Part of the ABC transporter complex MetNIQ involved in methionine import. Responsible for energy coupling to the transport system. The protein is Methionine import ATP-binding protein MetN 3 of Oceanobacillus iheyensis (strain DSM 14371 / CIP 107618 / JCM 11309 / KCTC 3954 / HTE831).